Here is a 74-residue protein sequence, read N- to C-terminus: Exodeoxyribonuclease 7 small subunit (74 aa).

Belongs to the XseB family. In terms of assembly, heterooligomer composed of large and small subunits.

It is found in the cytoplasm. The enzyme catalyses Exonucleolytic cleavage in either 5'- to 3'- or 3'- to 5'-direction to yield nucleoside 5'-phosphates.. Its function is as follows. Bidirectionally degrades single-stranded DNA into large acid-insoluble oligonucleotides, which are then degraded further into small acid-soluble oligonucleotides. The sequence is that of Exodeoxyribonuclease 7 small subunit from Leuconostoc citreum (strain KM20).